The following is a 106-amino-acid chain: MADFLGMMKQAAQLQSKMQAMQEELGSLEVEGISGGGLVAVRMTAKMEVKGIKIDPSLLKPDEAEILEDLLVTAHGDARRKAEAAMQEKMQAITGKLGLPPGFGFG.

Belongs to the YbaB/EbfC family. Homodimer.

Its subcellular location is the cytoplasm. It localises to the nucleoid. Functionally, binds to DNA and alters its conformation. May be involved in regulation of gene expression, nucleoid organization and DNA protection. This Bradyrhizobium sp. (strain BTAi1 / ATCC BAA-1182) protein is Nucleoid-associated protein BBta_7345.